A 668-amino-acid polypeptide reads, in one-letter code: MPRLALRQYNFYYRVNGEKAEELLKEYGEDGDFLLRYSESNPQNFSISVRVAEDKILHIKVTKYESDMLSIFEDERTTPNQFGSITELAEFYMEFPEKLREKNGLFLELKKPVYVPYHLEACAEEQRRTQLYRWWHGNLPASSANKLLQTEKNGTYLLRASQHIPGALVISAKTEGQVVHLTIYQDPSTGRFNIDGDRTKFQSAWLLIDSYSKNPIVEKGEASRVLYLEEPLFNTFIEADLFVDRFEIIRRPINPRESMEKTGISEEFDRLSQEALPAEQYLSKREGRRPVNAEKNRYKNIVPFDHTRVILTDRPNTPGSDYINASYVRFENSQRTKNVTFACEKSFIATQGCLETTISDFWSMVWQENSRVIVMPTMENERKEKCARYWPAEVNKPEVHGDISLTCTIERKVQRAVSDEVKAELEQEKTNRIAKGLVPEAELNGDGISYILRTLVMKKGKDTREIRQLQYLTWPDHGCPLHPYAVLNFLEDVDREYDYFNAQPIAASLPQGPIVVHCSAGIGRTGTVLVLDALLNQVKKVGLLCPMDVYKMVKYVRTYRSGLVQTEQQYQFLYKALAFYLKNNNPYPVKSFIDGDTDAFDFPRRLRPTPNASRPSSARQVTSSRPSSSASSRTSHSRPRTGPQAEPIFERSTSSTSSSSTLLKSTKK.

2 consecutive SH2 domains span residues 10–113 (NFYY…KKPV) and 134–232 (WWHG…EEPL). The region spanning 264–580 (ISEEFDRLSQ…QFLYKALAFY (317 aa)) is the Tyrosine-protein phosphatase domain. Cys-518 serves as the catalytic Phosphocysteine intermediate. The segment at 603–668 (PRRLRPTPNA…SSTLLKSTKK (66 aa)) is disordered. Composition is skewed to low complexity over residues 616-634 (SSAR…SSRT) and 652-668 (STSS…STKK).

This sequence belongs to the protein-tyrosine phosphatase family. Non-receptor class 2 subfamily. As to expression, expressed in embryonic cells, developing vulva, body wall muscles, head neurons and gonadal sheath cells.

The protein resides in the cytoplasm. It catalyses the reaction O-phospho-L-tyrosyl-[protein] + H2O = L-tyrosyl-[protein] + phosphate. Its function is as follows. Involved in embryonic and larval development. Plays a role in oogenesis by regulating mpk-1 phosphorylation and oocyte maturation in response to major sperm protein (MSP). During the formation of neuromuscular junctions at the larval stage, negatively regulates membrane protrusion from body wall muscles probably downstream of receptor egl-15. Plays a role in fluid homeostasis probably downstream of receptor egl-15 and adapter soc-1. Promotes vulva induction and negatively regulates fertility probably downstream of receptor let-23. Negatively regulates daf-2-mediated repression of dauer formation. This Caenorhabditis elegans protein is Tyrosine-protein phosphatase non-receptor type ptp-2.